A 192-amino-acid polypeptide reads, in one-letter code: Interleukin-18 (192 aa).

Positions 1-35 (MAAEPEDNCISFVEMKFINNTLYFVAENDEDLESD) are excised as a propeptide.

This sequence belongs to the IL-1 family. Forms a ternary complex with ligand-binding receptor subunit IL18R1 and signaling receptor subunit IL18RAP at the plasma membrane. Mature IL18 first binds to IL18R1 forming a low affinity binary complex, which then interacts with IL18RAP to form a high affinity ternary complex that signals inside the cell. Interacts with cargo receptor TMED10; the interaction mediates the translocation from the cytoplasm into the ERGIC (endoplasmic reticulum-Golgi intermediate compartment) and thereby secretion. Post-translationally, the pro-IL-18 precursor is processed by CASP1, CASP4 or CASP5 to yield its mature, active form. The pro-IL-18 precursor features autoinhibitory interactions between the propeptide and the post-cleavage-site region, preventing recognition by the IL18R1 receptor. Processing by CASP1, CASP4 or CASP5 induces conformational changes to generate critical receptor-binding sites. The mature form is then secreted and released in the extracellular milieu by passing through the gasdermin-D (GSDMD) pore. In contrast, cleavage by CASP3 inactivates IL18.

The protein localises to the cytoplasm. Its subcellular location is the cytosol. It is found in the secreted. Its function is as follows. Pro-inflammatory cytokine primarily involved in epithelial barrier repair, polarized T-helper 1 (Th1) cell and natural killer (NK) cell immune responses. Upon binding to IL18R1 and IL18RAP, forms a signaling ternary complex which activates NF-kappa-B, triggering synthesis of inflammatory mediators. Synergizes with IL12/interleukin-12 to induce IFNG synthesis from T-helper 1 (Th1) cells and natural killer (NK) cells. Involved in transduction of inflammation downstream of pyroptosis: its mature form is specifically released in the extracellular milieu by passing through the gasdermin-D (GSDMD) pore. This is Interleukin-18 (IL18) from Sus scrofa (Pig).